The sequence spans 243 residues: Pyridoxine 5'-phosphate synthase (243 aa).

A 3-amino-2-oxopropyl phosphate-binding site is contributed by Asn9. 11-12 contributes to the 1-deoxy-D-xylulose 5-phosphate binding site; sequence DH. Arg20 is a binding site for 3-amino-2-oxopropyl phosphate. Catalysis depends on His45, which acts as the Proton acceptor. Positions 47 and 52 each coordinate 1-deoxy-D-xylulose 5-phosphate. The Proton acceptor role is filled by Glu72. Residue Thr102 participates in 1-deoxy-D-xylulose 5-phosphate binding. The Proton donor role is filled by His193. 3-amino-2-oxopropyl phosphate-binding positions include Gly194 and 215-216; that span reads GH.

Belongs to the PNP synthase family. Homooctamer; tetramer of dimers.

Its subcellular location is the cytoplasm. It catalyses the reaction 3-amino-2-oxopropyl phosphate + 1-deoxy-D-xylulose 5-phosphate = pyridoxine 5'-phosphate + phosphate + 2 H2O + H(+). It functions in the pathway cofactor biosynthesis; pyridoxine 5'-phosphate biosynthesis; pyridoxine 5'-phosphate from D-erythrose 4-phosphate: step 5/5. Functionally, catalyzes the complicated ring closure reaction between the two acyclic compounds 1-deoxy-D-xylulose-5-phosphate (DXP) and 3-amino-2-oxopropyl phosphate (1-amino-acetone-3-phosphate or AAP) to form pyridoxine 5'-phosphate (PNP) and inorganic phosphate. This is Pyridoxine 5'-phosphate synthase from Photorhabdus laumondii subsp. laumondii (strain DSM 15139 / CIP 105565 / TT01) (Photorhabdus luminescens subsp. laumondii).